The sequence spans 156 residues: Arginine repressor (156 aa).

Belongs to the ArgR family.

The protein resides in the cytoplasm. The protein operates within amino-acid biosynthesis; L-arginine biosynthesis [regulation]. Regulates arginine biosynthesis genes. The chain is Arginine repressor from Shewanella frigidimarina (strain NCIMB 400).